We begin with the raw amino-acid sequence, 246 residues long: Putative S-adenosyl-L-methionine-dependent methyltransferase Mflv_0168 (246 aa).

S-adenosyl-L-methionine-binding positions include aspartate 112 and 141-142 (DL).

This sequence belongs to the UPF0677 family.

In terms of biological role, exhibits S-adenosyl-L-methionine-dependent methyltransferase activity. This Mycolicibacterium gilvum (strain PYR-GCK) (Mycobacterium gilvum (strain PYR-GCK)) protein is Putative S-adenosyl-L-methionine-dependent methyltransferase Mflv_0168.